Consider the following 571-residue polypeptide: Urease subunit alpha (571 aa).

A Urease domain is found at 132 to 571 (GGIDAHIHFI…VALAQRYFLF (440 aa)). Ni(2+) is bound by residues H137, H139, and K220. The residue at position 220 (K220) is an N6-carboxylysine. Residue H222 participates in substrate binding. Ni(2+) contacts are provided by H249 and H275. Catalysis depends on H323, which acts as the Proton donor. Ni(2+) is bound at residue D363.

It belongs to the metallo-dependent hydrolases superfamily. Urease alpha subunit family. In terms of assembly, heterotrimer of UreA (gamma), UreB (beta) and UreC (alpha) subunits. Three heterotrimers associate to form the active enzyme. Requires Ni cation as cofactor. In terms of processing, carboxylation allows a single lysine to coordinate two nickel ions.

It localises to the cytoplasm. The catalysed reaction is urea + 2 H2O + H(+) = hydrogencarbonate + 2 NH4(+). It functions in the pathway nitrogen metabolism; urea degradation; CO(2) and NH(3) from urea (urease route): step 1/1. The sequence is that of Urease subunit alpha from Halalkalibacterium halodurans (strain ATCC BAA-125 / DSM 18197 / FERM 7344 / JCM 9153 / C-125) (Bacillus halodurans).